A 196-amino-acid chain; its full sequence is Pyridoxal 5'-phosphate synthase subunit PdxT (196 aa).

L-glutamine is bound at residue 47–49 (GES). Residue Cys79 is the Nucleophile of the active site. Residues Arg106 and 134 to 135 (IR) each bind L-glutamine. Residues His170 and Glu172 each act as charge relay system in the active site.

It belongs to the glutaminase PdxT/SNO family. As to quaternary structure, in the presence of PdxS, forms a dodecamer of heterodimers. Only shows activity in the heterodimer.

It catalyses the reaction aldehydo-D-ribose 5-phosphate + D-glyceraldehyde 3-phosphate + L-glutamine = pyridoxal 5'-phosphate + L-glutamate + phosphate + 3 H2O + H(+). The catalysed reaction is L-glutamine + H2O = L-glutamate + NH4(+). It functions in the pathway cofactor biosynthesis; pyridoxal 5'-phosphate biosynthesis. Its function is as follows. Catalyzes the hydrolysis of glutamine to glutamate and ammonia as part of the biosynthesis of pyridoxal 5'-phosphate. The resulting ammonia molecule is channeled to the active site of PdxS. This chain is Pyridoxal 5'-phosphate synthase subunit PdxT, found in Bacillus subtilis (strain 168).